The primary structure comprises 398 residues: Flavin-containing monooxygenase ustF1 (398 aa).

Residues 1 to 22 (MTVSQVRRVAVIGAGISGVVST) form the signal peptide. FAD is bound at residue 13-18 (GAGISG). 4 N-linked (GlcNAc...) asparagine glycosylation sites follow: Asn-53, Asn-57, Asn-119, and Asn-126. An NADP(+)-binding site is contributed by 194–199 (GGGVSS). Residues Asn-236, Asn-243, and Asn-271 are each glycosylated (N-linked (GlcNAc...) asparagine).

It belongs to the FMO family.

It participates in mycotoxin biosynthesis. Functionally, flavin-containing monooxygenase; part of the gene cluster that mediates the biosynthesis of the secondary metabolite ustiloxin B, an antimitotic tetrapeptide. First, ustA is processed by the subtilisin-like endoprotease Kex2 that is outside the ustiloxin B gene cluster, at the C-terminal side of Arg-Lys, after transfer to Golgi apparatus through the endoplasmic reticulum (ER). Cleavage by KEX2 generates 16 peptides YAIG-I to YAIG-XVI. To process the precursor peptide further, at least two peptidases are necessary to cleave the N-terminal and C-terminal sides of the Tyr-Ala-Ile-Gly core peptide which serves as backbone for the synthesis of ustiloxin B, through cyclization and modification of the tyrosine with a non-protein coding amino acid, norvaline. One of the two peptidases must be the serine peptidase ustP; and the other pepdidase is probably ustH. Macrocyclization of the core peptide derived from ustA requires the tyrosinase ustQ, as well as the homologous oxidases ustYa and ustYb, and leads to the production of the first cyclization product N-desmethylustiloxin F. For the formation of N-desmethylustiloxin F, three oxidation steps are required, hydroxylation at the benzylic position, hydroxylation at either the aromatic ring of Tyr or beta-position of Ile, and oxidative cyclization. UstQ may catalyze the oxidation of a phenol moiety, whereas the ustYa and ustYb are most likely responsible for the remaining two-step oxidations. N-desmethylustiloxin F is then methylated by ustM to yield ustiloxin F which in turn substrate of the cytochrome P450 monooxygenase ustC which catalyzes the formation of S-deoxyustiloxin H. The flavoprotein monooxygenases ustF1 and ustF2 then participate in the modification of the side chain of S-deoxyustiloxin H, leading to the synthesis of an oxime intermediate, via ustiloxin H. Finally, carboxylative dehydration performed by the cysteine desulfurase-like protein ustD yields ustiloxin B. This chain is Flavin-containing monooxygenase ustF1, found in Aspergillus flavus (strain ATCC 200026 / FGSC A1120 / IAM 13836 / NRRL 3357 / JCM 12722 / SRRC 167).